A 1026-amino-acid polypeptide reads, in one-letter code: MESALSARDRVGVQDFLLLENHNSEAAFIENLRRRYREGLIYTYIGSVLVSVNPYKELEIYSKQNMERHRGVNFYEISPHIFALADNSYRALRTERRDQCILISGESGAGKTEASKKILQYYTHICPTRNNTHTIRERLLQSNPVLEAFGNAKTLRNDNSSRFGKYMDIQFDYKGAPIGGHILNYLLEKSRVAHQNHGERNFHIFYQLLEGGEDLLLKRLGLDKTNPQHYHYLIKGNCPRVSSISDKNGWKVVRNALTIIGFEDEEIQALMEIVASVLHLGNTQFGEDEEGETHITTEAQLQFLSQLLGVDGSVLKAALTHKKIVAKGEEMISPLSLEQALSARDSFAKAIYGRAFTWLVQKLNRSLAFKDEIYYSSKCSSVIGLLDIYGFEVFQHNSFEQFCINYCNEKLQQLFIELTLKSEQEEYEAEGWERVEYFNNKIICDLVEEKHKGIIAILDEECLRRGDASDITFLEKLEDTLGGHAHFITHKMANGKIRKAIGREEFRLVHYAGEVNYNVNGFLDKNNDLLYRHLKEVLCQSTNHIVSQCFHADELMDQRRPETAATQFKLSLAKLMDILMSKEPSYVRCIKPNDGKQPGRFDEVLVRHQVKYLGLMENLRVRRAGFAYRRSYEAFLERYKSLCPDTWPNWHGNLPEGVATLVKHLNYKPEEFKLGRSKIFIRFPRTLFITEDALEAQKQTIAVTLQKSWRGYRERANYHRIRHAVIVIQSWWRGVKGRRKAKHRRQAADTIRNFIKGFILRNEPRCPDNEYFLDHVRFSFLMKVKRNLPKSVLDKSWPKPPPSLTEASEHIHRICIRNLVNDYCRRIQPEWRKQLEQKVVASGIFKGQKDGYSRSVPKLFVATRLEAEEINLKVLQTLGSDNKVKYGIAVTKYDRHGFRPRVRQLLLTTSSAVLVQEAKIKQRIDYGALLGISVSSLSDGFFVLHIPTADSKQKGDLVLQCDHVIEAVTKLAIMADKIHNVNISQDSIRFAIARGKEGVIDFTSGSDLRVVKSKNGHLSVTTPRIS.

Residue Met-1 is modified to N-acetylmethionine. A Myosin motor domain is found at Gly-12–Glu-695. ATP-binding positions include Asn-53, Tyr-61, Ser-104–Glu-113, and Asn-157–Ser-161. Lys-349 carries the post-translational modification N6-methyllysine. Positions Leu-572–Asp-594 are actin-binding. 2 consecutive IQ domains span residues Lys-698 to Val-727 and Ile-721 to Thr-750. Residues Lys-849–Arg-1024 form the TH1 domain.

Belongs to the TRAFAC class myosin-kinesin ATPase superfamily. Myosin family. As to quaternary structure, interacts (via its IQ motifs) with calm.

The protein localises to the cytoplasm. It is found in the cell cortex. Its subcellular location is the cell projection. The protein resides in the ruffle membrane. It localises to the cytoplasmic vesicle. The protein localises to the stereocilium membrane. Functionally, myosins are actin-based motor molecules with ATPase activity. Unconventional myosins serve in intracellular movements. Their highly divergent tails are presumed to bind to membranous compartments, which would be moved relative to actin filaments. This chain is Unconventional myosin-Ic (myo1c), found in Danio rerio (Zebrafish).